The following is a 660-amino-acid chain: tRNA 5-methylaminomethyl-2-thiouridine biosynthesis bifunctional protein MnmC (660 aa).

A tRNA (mnm(5)s(2)U34)-methyltransferase region spans residues 1 to 242; the sequence is MTDRIVPATL…KRAMLVGEFA (242 aa). Positions 266–660 are FAD-dependent cmnm(5)s(2)U34 oxidoreductase; it reads IGAGLAGCAV…VRALRHGRVA (395 aa).

In the N-terminal section; belongs to the methyltransferase superfamily. tRNA (mnm(5)s(2)U34)-methyltransferase family. It in the C-terminal section; belongs to the DAO family. FAD is required as a cofactor.

The protein resides in the cytoplasm. The catalysed reaction is 5-aminomethyl-2-thiouridine(34) in tRNA + S-adenosyl-L-methionine = 5-methylaminomethyl-2-thiouridine(34) in tRNA + S-adenosyl-L-homocysteine + H(+). In terms of biological role, catalyzes the last two steps in the biosynthesis of 5-methylaminomethyl-2-thiouridine (mnm(5)s(2)U) at the wobble position (U34) in tRNA. Catalyzes the FAD-dependent demodification of cmnm(5)s(2)U34 to nm(5)s(2)U34, followed by the transfer of a methyl group from S-adenosyl-L-methionine to nm(5)s(2)U34, to form mnm(5)s(2)U34. The chain is tRNA 5-methylaminomethyl-2-thiouridine biosynthesis bifunctional protein MnmC from Burkholderia mallei (strain NCTC 10247).